The following is a 452-amino-acid chain: Probable ECA polymerase (452 aa).

The next 11 membrane-spanning stretches (helical) occupy residues 6–26, 37–57, 63–83, 118–138, 155–175, 181–201, 207–227, 228–248, 341–361, 378–398, and 410–430; these read FSGL…LTWF, VFFS…TSVL, VGVA…CFYG, VILM…NGFL, GVAL…VYFL, AWLF…MIVG, IIIA…ISLW, MLAA…LKRY, LVVM…GLII, YKAA…IVLA, and VFFL…FWLF.

The protein belongs to the WzyE family. Probably part of a complex composed of WzxE, WzyE and WzzE.

It localises to the cell inner membrane. Its pathway is bacterial outer membrane biogenesis; enterobacterial common antigen biosynthesis. Probably involved in the polymerization of enterobacterial common antigen (ECA) trisaccharide repeat units. This chain is Probable ECA polymerase, found in Salmonella choleraesuis (strain SC-B67).